The sequence spans 100 residues: UPF0251 protein swp_0615 (100 aa).

The protein belongs to the UPF0251 family.

In Shewanella piezotolerans (strain WP3 / JCM 13877), this protein is UPF0251 protein swp_0615.